Here is a 102-residue protein sequence, read N- to C-terminus: NADH-quinone oxidoreductase subunit K (102 aa).

A run of 3 helical transmembrane segments spans residues Leu6–Val26, Ile30–Val50, and Val62–Leu82.

The protein belongs to the complex I subunit 4L family. As to quaternary structure, NDH-1 is composed of 13 different subunits. Subunits NuoA, H, J, K, L, M, N constitute the membrane sector of the complex.

The protein localises to the cell inner membrane. It catalyses the reaction a quinone + NADH + 5 H(+)(in) = a quinol + NAD(+) + 4 H(+)(out). Functionally, NDH-1 shuttles electrons from NADH, via FMN and iron-sulfur (Fe-S) centers, to quinones in the respiratory chain. The immediate electron acceptor for the enzyme in this species is believed to be ubiquinone. Couples the redox reaction to proton translocation (for every two electrons transferred, four hydrogen ions are translocated across the cytoplasmic membrane), and thus conserves the redox energy in a proton gradient. The sequence is that of NADH-quinone oxidoreductase subunit K from Pseudomonas putida (strain W619).